A 147-amino-acid chain; its full sequence is Probable disulfide formation protein (147 aa).

A helical membrane pass occupies residues 9–28 (NYSLYFAWLTALIATLGSLY). Cysteines 38 and 41 form a disulfide. 2 consecutive transmembrane segments (helical) span residues 43-62 (YQRV…AYRT) and 69-86 (YALP…YQYL). A disulfide bond links C99 and C106. The helical transmembrane segment at 115 to 138 (GFITLPFLGMLATLIMSFFLIMAF) threads the bilayer.

It belongs to the DsbB family. BdbC subfamily.

The protein resides in the cell inner membrane. Required for disulfide bond formation in some proteins. This chain is Probable disulfide formation protein, found in Coxiella burnetii (strain CbuG_Q212) (Coxiella burnetii (strain Q212)).